The chain runs to 525 residues: MASPRELDEESPVYLVVSGIPAVLRSAQLRSYFSQFREQRGGGFLCFHYRHRPERGPPQASPEAARAGPDPAAEDPVLAQAPASDARAVRARGSAAAQTRTCCCVVSVRGAAQAQRLLRMYSGRRWLDSQGTWLPGRCLIRRLRLPTEVSDLGSFPFKTRKELQSRRAENEAFTLADLKQLPELNPPVLMPNGNVGTPLRVFLELIRSCRLPPRIITQLQLQFPKTGSSRRYGNVPFLYEDSETVEQEEHVYTAEGEEIPQGSCSEDPAAGSFDEPEDEGQQQEEEEESGSEEDDDRGEEWERHEALHEDVTGQERTTERLFEEEIELKWEKGGSGLVFYTDAQFWQEEEGDFDEQTADDWDVDMSVYYDRDGGDKDARDSVQMRLERRLREGQEDGSVLGGQVGTFERHTKGIGRKVMERQGWAEGQGLGSRCSGVPEALDGDGQHPRCKRGLGYHGEKLQPFRQLKRPRRTGLGLISTIYDEPLPQDQGETLLRRQPPTSMKFRTDMTFVKGSSCALDRPEPE.

Disordered stretches follow at residues 54-85 and 246-317; these read ERGP…PASD and EQEE…QERT. Acidic residues predominate over residues 274 to 299; that stretch reads DEPEDEGQQQEEEEESGSEEDDDRGE. The segment covering 300 to 317 has biased composition (basic and acidic residues); the sequence is EWERHEALHEDVTGQERT. Residues 411 to 459 form the G-patch domain; it reads TKGIGRKVMERQGWAEGQGLGSRCSGVPEALDGDGQHPRCKRGLGYHGE.

Interacts with mitochondrial MAVS; the interaction is markedly increased upon viral infection.

It localises to the nucleus. The protein localises to the cytoplasm. Its function is as follows. Involved in transcriptional regulation. It is able to activate transcription from CXCR4 promoter and therefore it might control neural crest cell migration involved in ocular and craniofacial development. Is a negative regulator of immune antiviral response, acting via down-regulation of RIG-I-like receptors signaling and inhibition of type I interferon production. The control mechanism involves interaction with mitochondrial MAVS and inhibition of MAVS assembly with downstream proteins implicated in antiviral response, such as TBK1 and TRAF6. This chain is G patch domain-containing protein 3 (Gpatch3), found in Mus musculus (Mouse).